Reading from the N-terminus, the 271-residue chain is Delta(7)-sterol-C5(6)-desaturase (271 aa).

A run of 2 helical transmembrane segments spans residues I44 to L64 and V120 to I140. A Fatty acid hydroxylase domain is found at A130–T259. The Histidine box-1 signature appears at H144–H148. The Histidine box-2 signature appears at H158–H162. The helical transmembrane segment at H190–L210 threads the bilayer. A Histidine box-3 motif is present at residues H235 to H239.

This sequence belongs to the sterol desaturase family. The cofactor is Fe cation.

It is found in the endoplasmic reticulum membrane. It catalyses the reaction a Delta(7)-sterol + 2 Fe(II)-[cytochrome b5] + O2 + 2 H(+) = a Delta(5),Delta(7)-sterol + 2 Fe(III)-[cytochrome b5] + 2 H2O. Its function is as follows. Involved in the biosynthesis of sitosterol and campesterol. The chain is Delta(7)-sterol-C5(6)-desaturase from Nicotiana tabacum (Common tobacco).